Here is a 103-residue protein sequence, read N- to C-terminus: Large ribosomal subunit protein bL21 (103 aa).

It belongs to the bacterial ribosomal protein bL21 family. Part of the 50S ribosomal subunit. Contacts protein L20.

In terms of biological role, this protein binds to 23S rRNA in the presence of protein L20. In Clostridium kluyveri (strain NBRC 12016), this protein is Large ribosomal subunit protein bL21.